The sequence spans 38 residues: U-theraphotoxin-Aju1a (38 aa).

Cystine bridges form between C3-C24, C7-C30, and C16-C35.

Expressed by the venom gland.

It is found in the secreted. Functionally, has strong antifungal activity against C.albicans MDM8, C.krusei IOC 4559 (MIC=2.5-5 uM), C.glabrata IOC 45658 (MIC=2.5-5 uM), C.albicans IOC 45588 (MIC=2.5-5 uM), C.parapsilosis IOC 456416 (MIC=2.5-5 uM), C.tropicalis IOC 45608 (MIC=2.5-5 uM), C.guilliermondii IOC 455716 (MIC=2.5-5 uM) and A.niger (MIC=5-10 uM). Lacks antifungal activity against B.bassiana. Has no antibacterial effect against Gram-positive bacteria M.luteus, S.epidermidis, S.aureus or against Gram-negative bacteria E.coli and P.aeruginosa. Has no hemolytic activity against human erythrocytes. Probable ion channel inhibitor. This chain is U-theraphotoxin-Aju1a, found in Avicularia juruensis (Yellow-banded pinktoe).